The chain runs to 875 residues: Valine--tRNA ligase (875 aa).

Positions 43-53 (PNVTGVLHMGH) match the 'HIGH' region motif. The 'KMSKS' region signature appears at 534 to 538 (KMSKS). K537 is an ATP binding site. Residues 805 to 875 (GNLINTEEEL…LKESIAALKK (71 aa)) are a coiled coil.

The protein belongs to the class-I aminoacyl-tRNA synthetase family. ValS type 1 subfamily. Monomer.

The protein localises to the cytoplasm. It carries out the reaction tRNA(Val) + L-valine + ATP = L-valyl-tRNA(Val) + AMP + diphosphate. Catalyzes the attachment of valine to tRNA(Val). As ValRS can inadvertently accommodate and process structurally similar amino acids such as threonine, to avoid such errors, it has a 'posttransfer' editing activity that hydrolyzes mischarged Thr-tRNA(Val) in a tRNA-dependent manner. The sequence is that of Valine--tRNA ligase from Phocaeicola vulgatus (strain ATCC 8482 / DSM 1447 / JCM 5826 / CCUG 4940 / NBRC 14291 / NCTC 11154) (Bacteroides vulgatus).